Here is an 855-residue protein sequence, read N- to C-terminus: DNA mismatch repair protein MutS (855 aa).

An ATP-binding site is contributed by 613-620; the sequence is GPNMGGKS. Residues 796–816 are disordered; it reads TTSLPHEMPSQQSGKPASPMQ.

It belongs to the DNA mismatch repair MutS family.

In terms of biological role, this protein is involved in the repair of mismatches in DNA. It is possible that it carries out the mismatch recognition step. This protein has a weak ATPase activity. In Pseudomonas aeruginosa (strain LESB58), this protein is DNA mismatch repair protein MutS.